A 1088-amino-acid polypeptide reads, in one-letter code: RNA-directed RNA polymerase (1088 aa).

Residues 501–687 (LSYGDVTRFL…AKRYIAGGKI (187 aa)) form the RdRp catalytic domain.

It belongs to the reoviridae RNA-directed RNA polymerase family. In terms of assembly, interacts with VP3 (Potential). Interacts with VP2; this interaction activates VP1. Interacts with NSP5; this interaction is probably necessary for the formation of functional virus factories. Interacts with NSP2; this interaction is weak. Mg(2+) serves as cofactor.

The protein localises to the virion. The catalysed reaction is RNA(n) + a ribonucleoside 5'-triphosphate = RNA(n+1) + diphosphate. Functionally, RNA-directed RNA polymerase that is involved in both transcription and genome replication. Together with VP3 capping enzyme, forms an enzyme complex positioned near the channels situated at each of the five-fold vertices of the core. Following infection, the outermost layer of the virus is lost, leaving a double-layered particle (DLP) made up of the core and VP6 shell. VP1 then catalyzes the transcription of fully conservative plus-strand genomic RNAs that are extruded through the DLP's channels into the cytoplasm where they function as mRNAs for translation of viral proteins. One copy of each of the viral (+)RNAs is also recruited during core assembly, together with newly synthesized polymerase complexes and VP2. The polymerase of these novo-formed particles catalyzes the synthesis of complementary minus-strands leading to dsRNA formation. To do so, the polymerase specifically recognizes and binds 4 bases 5'-UGUG-3' in the conserved 3'-sequence of plus-strand RNA templates. VP2 presumably activates the autoinhibited VP1-RNA complex to coordinate packaging and genome replication. Once dsRNA synthesis is complete, the polymerase switches to the transcriptional mode, thus providing secondary transcription. This Rotavirus A (strain RVA/SA11-Both/G3P5B[2]) (RV-A) protein is RNA-directed RNA polymerase.